Here is a 648-residue protein sequence, read N- to C-terminus: Acyl-CoA-binding domain-containing protein 5 (648 aa).

The ACB domain occupies 13–107; it reads YPERFYAAAS…LEEADPGWYP (95 aa). Residues lysine 34, 49–53, and lysine 75 each bind an acyl-CoA; that span reads YTLHQ. Kelch repeat units lie at residues 196–244, 256–306, 307–357, 359–408, 409–457, and 464–509; these read KMYM…KLTH, QLLS…LVGK, SLVI…VHAE, YLLI…TIGE, NWYI…LVVS, and IVVA…AVNN. Serine 517 carries the post-translational modification Phosphoserine. Residues 520–632 are a coiled coil; that stretch reads KVEGKADRII…AATMNAKRQS (113 aa). Polar residues predominate over residues 625–634; that stretch reads TMNAKRQSSG. The interval 625 to 648 is disordered; the sequence is TMNAKRQSSGGVWGWLAGTPPPKT.

Belongs to the ACBP family. Expressed in roots, stems, leaves, flowers and siliques.

It localises to the cytoplasm. Binds medium- and long-chain acyl-CoA esters with very high affinity. Can interact in vitro with oleoyl-CoA, barely with palmitoyl-CoA, but not with arachidonyl-CoA. May function as an intracellular carrier of acyl-CoA esters. The protein is Acyl-CoA-binding domain-containing protein 5 (ACBP5) of Arabidopsis thaliana (Mouse-ear cress).